The following is a 412-amino-acid chain: ATP phosphoribosyltransferase regulatory subunit (412 aa).

The protein belongs to the class-II aminoacyl-tRNA synthetase family. HisZ subfamily. Heteromultimer composed of HisG and HisZ subunits.

It localises to the cytoplasm. It functions in the pathway amino-acid biosynthesis; L-histidine biosynthesis; L-histidine from 5-phospho-alpha-D-ribose 1-diphosphate: step 1/9. Functionally, required for the first step of histidine biosynthesis. May allow the feedback regulation of ATP phosphoribosyltransferase activity by histidine. This Dehalococcoides mccartyi (strain CBDB1) protein is ATP phosphoribosyltransferase regulatory subunit.